The chain runs to 180 residues: Inner membrane-spanning protein YciB (180 aa).

The next 6 membrane-spanning stretches (helical) occupy residues leucine 4 to isoleucine 24, glutamine 25 to isoleucine 45, leucine 52 to aspartate 72, isoleucine 76 to isoleucine 96, isoleucine 118 to valine 138, and phenylalanine 150 to leucine 170.

The protein belongs to the YciB family.

Its subcellular location is the cell inner membrane. Functionally, plays a role in cell envelope biogenesis, maintenance of cell envelope integrity and membrane homeostasis. This chain is Inner membrane-spanning protein YciB, found in Rickettsia bellii (strain RML369-C).